The sequence spans 246 residues: 14-3-3 protein beta/alpha (246 aa).

Met-1 is subject to N-acetylmethionine. At Thr-2 the chain carries N-acetylthreonine; in 14-3-3 protein beta/alpha, N-terminally processed. Thr-2 bears the Phosphothreonine mark. An N6-acetyllysine modification is found at Lys-5. Lys-51 carries the N6-acetyllysine; alternate modification. Lys-51 participates in a covalent cross-link: Glycyl lysine isopeptide (Lys-Gly) (interchain with G-Cter in SUMO2); alternate. Ser-60 is modified (phosphoserine). Lys-70 carries the N6-acetyllysine modification. A 3'-nitrotyrosine mark is found at Tyr-84 and Tyr-106. Lys-117 carries the post-translational modification N6-acetyllysine. Phosphoserine is present on residues Ser-186 and Ser-232.

This sequence belongs to the 14-3-3 family. Homodimer. Interacts with SAMSN1 and PRKCE. Interacts with AKAP13. Interacts with SSH1 and TORC2/CRTC2. Interacts with ABL1; the interaction results in cytoplasmic location of ABL1 and inhibition of cABL-mediated apoptosis. Interacts with ROR2 (dimer); the interaction results in phosphorylation of YWHAB on tyrosine residues. Interacts with GAB2. Interacts with YAP1 (phosphorylated form). Interacts with the phosphorylated (by AKT1) form of SRPK2. Interacts with PKA-phosphorylated AANAT. Interacts with MYO1C. Interacts with SIRT2. Interacts with the 'Thr-369' phosphorylated form of DAPK2. Interacts with PI4KB, TBC1D22A and TBC1D22B. Interacts with the 'Ser-1134' and 'Ser-1161' phosphorylated form of SOS1. Interacts (via phosphorylated form) with YWHAB; this interaction occurs in a protein kinase AKT1-dependent manner. Interacts with SLITRK1. Interacts with SYNPO2 (phosphorylated form); YWHAB competes with ACTN2 for interaction with SYNPO2. Interacts with RIPOR2 (via phosphorylated form); this interaction occurs in a chemokine-dependent manner and does not compete for binding of RIPOR2 with RHOA nor blocks inhibition of RIPOR2-mediated RHOA activity. Interacts with MARK2 and MARK3. Interacts with TESK1; the interaction is dependent on the phosphorylation of TESK1 'Ser-439' and inhibits TESK1 kinase activity. Interacts with MEFV. Interacts with HDAC4. Interacts with ADAM22 (via C-terminus). In terms of processing, the alpha, brain-specific form differs from the beta form in being phosphorylated. Phosphorylated on Ser-60 by protein kinase C delta type catalytic subunit in a sphingosine-dependent fashion. Isoform Short contains a N-acetylmethionine at position 1.

The protein localises to the cytoplasm. Its subcellular location is the melanosome. Its function is as follows. Adapter protein implicated in the regulation of a large spectrum of both general and specialized signaling pathways. Binds to a large number of partners, usually by recognition of a phosphoserine or phosphothreonine motif. Binding generally results in the modulation of the activity of the binding partner. Negative regulator of osteogenesis. Blocks the nuclear translocation of the phosphorylated form (by AKT1) of SRPK2 and antagonizes its stimulatory effect on cyclin D1 expression resulting in blockage of neuronal apoptosis elicited by SRPK2. Negative regulator of signaling cascades that mediate activation of MAP kinases via AKAP13. This Rattus norvegicus (Rat) protein is 14-3-3 protein beta/alpha (Ywhab).